The sequence spans 356 residues: Protein pelota homolog (356 aa).

This sequence belongs to the eukaryotic release factor 1 family. Pelota subfamily. In terms of assembly, monomer. Requires a divalent metal cation as cofactor.

Its subcellular location is the cytoplasm. May function in recognizing stalled ribosomes, interact with stem-loop structures in stalled mRNA molecules, and effect endonucleolytic cleavage of the mRNA. May play a role in the release non-functional ribosomes and degradation of damaged mRNAs. Has endoribonuclease activity. This Desulfurococcus amylolyticus (strain DSM 18924 / JCM 16383 / VKM B-2413 / 1221n) (Desulfurococcus kamchatkensis) protein is Protein pelota homolog.